A 458-amino-acid chain; its full sequence is Phosphoglucosamine mutase (458 aa).

Ser108 serves as the catalytic Phosphoserine intermediate. Mg(2+)-binding residues include Ser108, Asp247, Asp249, and Asp251. At Ser108 the chain carries Phosphoserine.

It belongs to the phosphohexose mutase family. Mg(2+) serves as cofactor. Post-translationally, activated by phosphorylation.

It catalyses the reaction alpha-D-glucosamine 1-phosphate = D-glucosamine 6-phosphate. Its function is as follows. Catalyzes the conversion of glucosamine-6-phosphate to glucosamine-1-phosphate. The chain is Phosphoglucosamine mutase from Nitrosomonas europaea (strain ATCC 19718 / CIP 103999 / KCTC 2705 / NBRC 14298).